We begin with the raw amino-acid sequence, 216 residues long: MTVTNNEIAREFAERLLAIEAVSLSPDAPFTWASGLHSPIYCDNRVTLSDPQTRDLIADGLASLVRTNFHQVDVVAGTATAGIAHAALAADRLGAPMAYVRSVPKDHGRGNQIEGRIPAHSKVIMVEDLISTGGSVLKAAQAVEREGSTVVGVLALFSYELEKGHRAFEKAGVPLYTLSNYPILIEVAAESGRITSEQQATLATWSSDPQAWSDAH.

5-phospho-alpha-D-ribose 1-diphosphate contacts are provided by residues Arg101, Lys105, His107, and 127–135; that span reads EDLISTGGS. Ser131 is an orotate binding site.

The protein belongs to the purine/pyrimidine phosphoribosyltransferase family. PyrE subfamily. Homodimer. Mg(2+) is required as a cofactor.

It carries out the reaction orotidine 5'-phosphate + diphosphate = orotate + 5-phospho-alpha-D-ribose 1-diphosphate. It participates in pyrimidine metabolism; UMP biosynthesis via de novo pathway; UMP from orotate: step 1/2. Its function is as follows. Catalyzes the transfer of a ribosyl phosphate group from 5-phosphoribose 1-diphosphate to orotate, leading to the formation of orotidine monophosphate (OMP). This chain is Orotate phosphoribosyltransferase, found in Cutibacterium acnes (strain DSM 16379 / KPA171202) (Propionibacterium acnes).